The following is an 807-amino-acid chain: Hyaluronate lyase (807 aa).

A signal peptide spans 1–40 (MTYRIKKWQKLSTITLLMAGVITLNGGEFRSVDKHQIAVA). Active-site residues include Asn241, His297, and Tyr306.

This sequence belongs to the polysaccharide lyase 8 family.

The protein resides in the secreted. It carries out the reaction [hyaluronan](n) = n 3-(4-deoxy-beta-D-gluc-4-enuronosyl)-N-acetyl-D-glucosamine + H2O. This is Hyaluronate lyase from Staphylococcus aureus (strain NCTC 8325 / PS 47).